A 123-amino-acid chain; its full sequence is Large ribosomal subunit protein bL12 (123 aa).

This sequence belongs to the bacterial ribosomal protein bL12 family. In terms of assembly, homodimer. Part of the ribosomal stalk of the 50S ribosomal subunit. Forms a multimeric L10(L12)X complex, where L10 forms an elongated spine to which 2 to 4 L12 dimers bind in a sequential fashion. Binds GTP-bound translation factors.

In terms of biological role, forms part of the ribosomal stalk which helps the ribosome interact with GTP-bound translation factors. Is thus essential for accurate translation. This chain is Large ribosomal subunit protein bL12, found in Ectopseudomonas mendocina (strain ymp) (Pseudomonas mendocina).